A 245-amino-acid polypeptide reads, in one-letter code: Pyridoxine 5'-phosphate synthase (245 aa).

N7 is a binding site for 3-amino-2-oxopropyl phosphate. 9–10 is a 1-deoxy-D-xylulose 5-phosphate binding site; the sequence is DH. Residue R18 participates in 3-amino-2-oxopropyl phosphate binding. Catalysis depends on H43, which acts as the Proton acceptor. 2 residues coordinate 1-deoxy-D-xylulose 5-phosphate: R45 and H50. E70 serves as the catalytic Proton acceptor. T100 contacts 1-deoxy-D-xylulose 5-phosphate. Residue H190 is the Proton donor of the active site. 3-amino-2-oxopropyl phosphate-binding positions include G191 and 212–213; that span reads GH.

Belongs to the PNP synthase family. In terms of assembly, homooctamer; tetramer of dimers.

The protein localises to the cytoplasm. The enzyme catalyses 3-amino-2-oxopropyl phosphate + 1-deoxy-D-xylulose 5-phosphate = pyridoxine 5'-phosphate + phosphate + 2 H2O + H(+). It participates in cofactor biosynthesis; pyridoxine 5'-phosphate biosynthesis; pyridoxine 5'-phosphate from D-erythrose 4-phosphate: step 5/5. In terms of biological role, catalyzes the complicated ring closure reaction between the two acyclic compounds 1-deoxy-D-xylulose-5-phosphate (DXP) and 3-amino-2-oxopropyl phosphate (1-amino-acetone-3-phosphate or AAP) to form pyridoxine 5'-phosphate (PNP) and inorganic phosphate. This is Pyridoxine 5'-phosphate synthase from Prochlorococcus marinus (strain NATL1A).